A 429-amino-acid polypeptide reads, in one-letter code: C4-dicarboxylate transport protein (429 aa).

8 consecutive transmembrane segments (helical) span residues 9–29 (VLYVQVIFAIVVGVILGHYYP), 45–65 (LIKMVIGPIIFCTVVTGIAGM), 79–99 (LLYFEIVSTFALVLGLAATHI), 149–169 (GEILQILLIALLFGSVLAHLG), 185–205 (VLFGIVHIVTKLAPIGAFGAM), 223–243 (LIGTFYLTSVVFVLVVLGAIA), 308–328 (IYMTMAVLFIAQATNIELTWM), and 356–376 (AATLAVVPTIPLSGMVLILGI).

This sequence belongs to the dicarboxylate/amino acid:cation symporter (DAACS) (TC 2.A.23) family.

The protein localises to the cell inner membrane. Its function is as follows. Responsible for the transport of dicarboxylates such as succinate, fumarate, and malate from the periplasm across the membrane. The protein is C4-dicarboxylate transport protein of Burkholderia multivorans (strain ATCC 17616 / 249).